The following is a 509-amino-acid chain: Bifunctional purine biosynthesis protein PurH (509 aa).

Residues 1–144 enclose the MGS-like domain; the sequence is MKRALISVSD…KNYAAVTVVV (144 aa).

This sequence belongs to the PurH family.

It catalyses the reaction (6R)-10-formyltetrahydrofolate + 5-amino-1-(5-phospho-beta-D-ribosyl)imidazole-4-carboxamide = 5-formamido-1-(5-phospho-D-ribosyl)imidazole-4-carboxamide + (6S)-5,6,7,8-tetrahydrofolate. The enzyme catalyses IMP + H2O = 5-formamido-1-(5-phospho-D-ribosyl)imidazole-4-carboxamide. Its pathway is purine metabolism; IMP biosynthesis via de novo pathway; 5-formamido-1-(5-phospho-D-ribosyl)imidazole-4-carboxamide from 5-amino-1-(5-phospho-D-ribosyl)imidazole-4-carboxamide (10-formyl THF route): step 1/1. It participates in purine metabolism; IMP biosynthesis via de novo pathway; IMP from 5-formamido-1-(5-phospho-D-ribosyl)imidazole-4-carboxamide: step 1/1. The chain is Bifunctional purine biosynthesis protein PurH from Listeria monocytogenes serotype 4a (strain HCC23).